Consider the following 388-residue polypeptide: Zinc finger protein 1 (388 aa).

Over residues 1 to 19 (MSSIPNINWNDPNNGKSNT) the composition is skewed to polar residues. Disordered stretches follow at residues 1-120 (MSSI…QQPL), 157-219 (LQQR…QQWD), and 236-311 (SSIQ…KPIT). Low complexity predominate over residues 20–38 (SRQSQPQPQLPSNVSPPNS). Composition is skewed to polar residues over residues 52-67 (YGSSQFSNEYSRNPNT) and 88-97 (YPVQQTAQQR). Composition is skewed to low complexity over residues 102 to 120 (LQQVHSQQQQQQQQQQQPL) and 157 to 172 (LQQRQQAQGQQLKSQL). The span at 173–203 (NEQNAMMSASTQQYPVQDFTNPYPNAQNPAE) shows a compositional bias: polar residues. Low complexity-rich tracts occupy residues 204-217 (QQQQQQPLRTQSQQ) and 236-259 (SSIQQQIPPQNLSPSEQQQVKQQQ). A compositionally biased stretch (basic residues) spans 268–278 (KKKPGRKPKLR). The span at 282–294 (ESSSETPQVPKTA) shows a compositional bias: polar residues. Positions 318 to 345 (CLTCRQRKKRCCETRPRCTECTRLRLNC) form a DNA-binding region, zn(2)-C6 fungal-type. Positions 348 to 367 (PKPGTEHKNKPKDQKDDENT) are disordered. Residues 351-367 (GTEHKNKPKDQKDDENT) are compositionally biased toward basic and acidic residues.

The protein localises to the nucleus. Functionally, perhaps a regulatory role. May be involved in transcriptional activation. The polypeptide is Zinc finger protein 1 (CZF1) (Candida albicans (strain WO-1) (Yeast)).